A 115-amino-acid chain; its full sequence is Phosphoribosyl-ATP pyrophosphatase (115 aa).

Belongs to the PRA-PH family.

The protein resides in the cytoplasm. The catalysed reaction is 1-(5-phospho-beta-D-ribosyl)-ATP + H2O = 1-(5-phospho-beta-D-ribosyl)-5'-AMP + diphosphate + H(+). It functions in the pathway amino-acid biosynthesis; L-histidine biosynthesis; L-histidine from 5-phospho-alpha-D-ribose 1-diphosphate: step 2/9. The protein is Phosphoribosyl-ATP pyrophosphatase of Bordetella parapertussis (strain 12822 / ATCC BAA-587 / NCTC 13253).